A 302-amino-acid chain; its full sequence is Mitochondrial adapter protein MCP1 (302 aa).

Residues Met-1–Arg-35 are disordered. Residues Met-1 to Ser-61 lie on the Cytoplasmic side of the membrane. The short motif at Leu-4–Val-12 is the PxP element. The chain crosses the membrane as a helical span at residues Val-62–Val-82. Over Ser-83–Pro-100 the chain is Mitochondrial intermembrane. Residues Ser-101–Leu-121 form a helical membrane-spanning segment. At Arg-122–Gln-173 the chain is on the cytoplasmic side. Residues Val-174 to Val-194 traverse the membrane as a helical segment. Residues Pro-195–Lys-219 are Mitochondrial intermembrane-facing. A helical membrane pass occupies residues Trp-220 to Ser-240. The Cytoplasmic portion of the chain corresponds to Gly-241 to Ser-258. The chain crosses the membrane as a helical span at residues Thr-259–Met-276. Residues Lys-277 to Asn-302 are Mitochondrial intermembrane-facing.

In terms of assembly, interacts (via PxP motif) with VPS13 (via SHR-BD domain).

The protein localises to the mitochondrion outer membrane. Functionally, recruits the lipid transfer protein Vps13 to mitochondria thereby promoting vacuole-mitochondria contacts. Involved in mitochondrial lipid homeostasis. In Saccharomyces cerevisiae (strain ATCC 204508 / S288c) (Baker's yeast), this protein is Mitochondrial adapter protein MCP1.